Here is a 59-residue protein sequence, read N- to C-terminus: Large ribosomal subunit protein uL30 (59 aa).

The protein belongs to the universal ribosomal protein uL30 family. In terms of assembly, part of the 50S ribosomal subunit.

The sequence is that of Large ribosomal subunit protein uL30 from Brachyspira hyodysenteriae (strain ATCC 49526 / WA1).